The following is a 385-amino-acid chain: S-type anion channel SLAH1 (385 aa).

Residues 1–42 (MEIPRQEIHIEIDNSIPSSKEFKTGLADAKPVVLMSALRSLH) lie on the Cytoplasmic side of the membrane. The helical transmembrane segment at 43–65 (AGYFRISLSLCSQALLWKIMIAP) threads the bilayer. Over 66–81 (ESPSMSHMHSKLPSMA) the chain is Extracellular. A helical membrane pass occupies residues 82–102 (FHLLWYLALVTQVSLCFLYAL). Over 103 to 114 (KCIFFFDKVKEE) the chain is Cytoplasmic. The chain crosses the membrane as a helical span at residues 115–135 (FLHYIGVNYLYAPSISWLLML). Over 136-150 (QSAPMMEPNSVLYQT) the chain is Extracellular. The helical transmembrane segment at 151 to 171 (LFWIFAVPVLTLDIKLYGQWF) threads the bilayer. At 172–176 (TTEKR) the chain is on the cytoplasmic side. The chain crosses the membrane as a helical span at residues 177–197 (FLSMLANPASQVSVIANLVAA). The Extracellular segment spans residues 198-207 (RGAAEMGWNE). A helical transmembrane segment spans residues 208–228 (CALCMFSLGMVHYLVIFVTLY). The Cytoplasmic portion of the chain corresponds to 229–243 (QRLPGGNNFPAKLRP). Residues 244-264 (IFFLFVAAPAMASLAWNSICG) form a helical membrane-spanning segment. A topological domain (extracellular) is located at residue threonine 265. The chain crosses the membrane as a helical span at residues 266 to 286 (FDAVAKMLFFLSLFIFMSLVC). At 287-299 (RPNLFKKSMKRFN) the chain is on the cytoplasmic side. The helical transmembrane segment at 300 to 320 (VAWWAYSFPLTFLALDSVQYA) threads the bilayer. Residues 321–330 (QEVKDPVGSG) are Extracellular-facing. Residues 331 to 351 (LMLIFSSISVLIFLGMMVLTA) traverse the membrane as a helical segment. The Cytoplasmic segment spans residues 352–385 (ANSNRLLRHDPVLGSATDPKDKQKTLSLNATNQN). Residues 366–385 (SATDPKDKQKTLSLNATNQN) are disordered. A compositionally biased stretch (polar residues) spans 376-385 (TLSLNATNQN).

The protein belongs to the SLAC1 S-type anion channel family. As to quaternary structure, homotrimer. In terms of tissue distribution, expressed in the vascular systems of root.

Its subcellular location is the cell membrane. In terms of biological role, slow, weak voltage-dependent S-type anion efflux channel involved in maintenance of anion homeostasis. The sequence is that of S-type anion channel SLAH1 (SLAH1) from Arabidopsis thaliana (Mouse-ear cress).